The following is a 632-amino-acid chain: Maltase 1 (632 aa).

The span at 1-29 (MEEGERWREGHVYQRSSETRKPTNYDRPD) shows a compositional bias: basic and acidic residues. The disordered stretch occupies residues 1–30 (MEEGERWREGHVYQRSSETRKPTNYDRPDS). Residues Asn-179 and Asn-212 are each glycosylated (N-linked (GlcNAc...) asparagine). The active-site Nucleophile is Asp-280. The N-linked (GlcNAc...) asparagine glycan is linked to Asn-333. Glu-348 acts as the Proton donor in catalysis. Residues Asn-461, Asn-575, and Asn-578 are each glycosylated (N-linked (GlcNAc...) asparagine).

Belongs to the glycosyl hydrolase 13 family.

It catalyses the reaction Hydrolysis of terminal, non-reducing (1-&gt;4)-linked alpha-D-glucose residues with release of alpha-D-glucose.. The sequence is that of Maltase 1 (Mal-B1) from Drosophila virilis (Fruit fly).